Here is a 161-residue protein sequence, read N- to C-terminus: Photosystem II extrinsic protein V (161 aa).

The N-terminal stretch at 1-25 (MKKFFISVVFIVLLTFTTFINSATA) is a signal peptide. Residues C61, C64, H65, and H116 each coordinate heme c.

The protein belongs to the cytochrome c family. PsbV subfamily. As to quaternary structure, PSII is composed of 1 copy each of membrane proteins PsbA, PsbB, PsbC, PsbD, PsbE, PsbF, PsbH, PsbI, PsbJ, PsbK, PsbL, PsbM, PsbT, PsbX, PsbY, PsbZ, Psb30/Ycf12, peripheral proteins PsbO, CyanoQ (PsbQ), PsbU, PsbV and a large number of cofactors. It forms dimeric complexes. The cofactor is heme c.

Its subcellular location is the cellular thylakoid membrane. Its function is as follows. One of the extrinsic, lumenal subunits of photosystem II (PSII). PSII is a light-driven water plastoquinone oxidoreductase, using light energy to abstract electrons from H(2)O, generating a proton gradient subsequently used for ATP formation. The extrinsic proteins stabilize the structure of photosystem II oxygen-evolving complex (OEC), the ion environment of oxygen evolution and protect the OEC against heat-induced inactivation. Low-potential cytochrome c that plays a role in the OEC of PSII. This chain is Photosystem II extrinsic protein V, found in Trichodesmium erythraeum (strain IMS101).